We begin with the raw amino-acid sequence, 84 residues long: Gomesin (84 aa).

The first 23 residues, 1 to 23 (MNRTRLFACLLLAVLILVHESNA), serve as a signal peptide directing secretion. At Gln24 the chain carries Pyrrolidone carboxylic acid. Cystine bridges form between Cys25–Cys38 and Cys29–Cys34. Arginine amide is present on Arg41. A propeptide spanning residues 42–84 (GKRSLDETNVGTSDVEKRAFDDSNVPSLVEERELEDEGSFIFD) is cleaved from the precursor.

In terms of tissue distribution, in hemocytes only, but not in all hemocytes observed.

It is found in the secreted. Functionally, active against several Gram-positive bacteria such as Bacillus spp, Staphylococcus spp and E.faecalis, several Gram-negative bacteria such as E.coli, K.pneumoniae, P.aeruginosa and Salmonella spp, filamentous fungi such as N.crassa, T.viridae and yeasts such as C.albicans. It is active against the parasite L.amazonensis as well. It shows hemolytic activity. This chain is Gomesin, found in Acanthoscurria gomesiana (Tarantula spider).